Here is a 219-residue protein sequence, read N- to C-terminus: DnaJ homolog subfamily C member 30, mitochondrial (219 aa).

Residues 1-38 constitute a mitochondrion transit peptide; the sequence is MAAARCLGWTLSPLWRWWQVRGLPPSSATGLCSRGRTY. Residues 42–107 enclose the J domain; it reads ALYELLGVPS…ILRRKYDRGL (66 aa). Positions 109 to 148 are disordered; the sequence is SDQDLRGPGVKPSKTPVADPAPPRPPPYTPRAPGGSRASP. The span at 127-138 shows a compositional bias: pro residues; sequence DPAPPRPPPYTP. Residues 202 to 218 traverse the membrane as a helical segment; that stretch reads ATFFVVLFLIFVFVGFR.

In terms of assembly, associates with the ATP synthase complex. Interacts with MT-ATP6; interaction is direct. Interacts with ATP5MC2; interaction is direct. In terms of tissue distribution, in brain, expressed in gray matter structures.

It is found in the mitochondrion inner membrane. Functionally, mitochondrial protein enriched in neurons that acts as a regulator of mitochondrial respiration. Associates with the ATP synthase complex and facilitates ATP synthesis. May be a chaperone protein involved in the turnover of the subunits of mitochondrial complex I N-module. It facilitates the degradation of N-module subunits damaged by oxidative stress, and contributes to complex I functional efficiency. This is DnaJ homolog subfamily C member 30, mitochondrial from Mus musculus (Mouse).